The following is a 196-amino-acid chain: Ribose 1,5-bisphosphate phosphokinase PhnN (196 aa).

Belongs to the ribose 1,5-bisphosphokinase family.

It carries out the reaction alpha-D-ribose 1,5-bisphosphate + ATP = 5-phospho-alpha-D-ribose 1-diphosphate + ADP. It participates in metabolic intermediate biosynthesis; 5-phospho-alpha-D-ribose 1-diphosphate biosynthesis; 5-phospho-alpha-D-ribose 1-diphosphate from D-ribose 5-phosphate (route II): step 3/3. Its function is as follows. Catalyzes the phosphorylation of ribose 1,5-bisphosphate to 5-phospho-D-ribosyl alpha-1-diphosphate (PRPP). The chain is Ribose 1,5-bisphosphate phosphokinase PhnN from Psychromonas ingrahamii (strain DSM 17664 / CCUG 51855 / 37).